A 180-amino-acid chain; its full sequence is Large ribosomal subunit protein uL5 (180 aa).

Belongs to the universal ribosomal protein uL5 family. In terms of assembly, part of the 50S ribosomal subunit; part of the 5S rRNA/L5/L18/L25 subcomplex. Contacts the 5S rRNA and the P site tRNA. Forms a bridge to the 30S subunit in the 70S ribosome.

Functionally, this is one of the proteins that bind and probably mediate the attachment of the 5S RNA into the large ribosomal subunit, where it forms part of the central protuberance. In the 70S ribosome it contacts protein S13 of the 30S subunit (bridge B1b), connecting the 2 subunits; this bridge is implicated in subunit movement. Contacts the P site tRNA; the 5S rRNA and some of its associated proteins might help stabilize positioning of ribosome-bound tRNAs. This Clostridium tetani (strain Massachusetts / E88) protein is Large ribosomal subunit protein uL5.